We begin with the raw amino-acid sequence, 325 residues long: Centromere protein O (325 aa).

Residues 1-35 are disordered; sequence MEEERNSDEKENALCGRSLTAASRDGGGRMPAAPL. Positions 55–112 form a coiled coil; it reads LEMLEAQAHELGLKQEEKEQQEKKLDRLKARVQELRARRDELRAKVELQEKRLLDKEG.

Belongs to the CENP-O/MCM21 family. As to quaternary structure, component of the CENPA-HI complex, at least composed of CENPH, CENPI, CENPK, CENPL, CENPM, CENPO and CENPP. Component of a discrete complex composed of at least CENPO, CENPP, CENPQ, CENPR and CENPU.

The protein resides in the nucleus. The protein localises to the chromosome. It is found in the centromere. Functionally, component of the CENPA-HI complex, a centromeric complex involved in assembly of kinetochore proteins, mitotic progression and chromosome segregation. Involved in kinetochore assembly and required for recovery from spindle damage. The sequence is that of Centromere protein O (CENPO) from Gallus gallus (Chicken).